Here is a 155-residue protein sequence, read N- to C-terminus: Ciliary microtubule inner protein 2C (155 aa).

It belongs to the CIMIP2 family.

The protein localises to the cytoplasm. It localises to the cytoskeleton. It is found in the cilium axoneme. In terms of biological role, microtubule inner protein (MIP) part of the dynein-decorated doublet microtubules (DMTs) in cilia axoneme, which is required for motile cilia beating. The polypeptide is Ciliary microtubule inner protein 2C (cimip2c) (Xenopus tropicalis (Western clawed frog)).